The chain runs to 405 residues: Tryptophan synthase beta chain (405 aa).

Position 98 is an N6-(pyridoxal phosphate)lysine (Lys-98).

The protein belongs to the TrpB family. As to quaternary structure, tetramer of two alpha and two beta chains. Requires pyridoxal 5'-phosphate as cofactor.

It carries out the reaction (1S,2R)-1-C-(indol-3-yl)glycerol 3-phosphate + L-serine = D-glyceraldehyde 3-phosphate + L-tryptophan + H2O. Its pathway is amino-acid biosynthesis; L-tryptophan biosynthesis; L-tryptophan from chorismate: step 5/5. Its function is as follows. The beta subunit is responsible for the synthesis of L-tryptophan from indole and L-serine. This is Tryptophan synthase beta chain from Xanthomonas oryzae pv. oryzae (strain PXO99A).